A 758-amino-acid polypeptide reads, in one-letter code: 5-methyltetrahydropteroyltriglutamate--homocysteine methyltransferase (758 aa).

5-methyltetrahydropteroyltri-L-glutamate is bound by residues 17 to 20 (RELK) and Lys-117. L-homocysteine is bound by residues 434–436 (IGS) and Glu-487. L-methionine contacts are provided by residues 434-436 (IGS) and Glu-487. 5-methyltetrahydropteroyltri-L-glutamate-binding positions include 518–519 (RC) and Trp-564. Asp-602 provides a ligand contact to L-homocysteine. Asp-602 is an L-methionine binding site. 5-methyltetrahydropteroyltri-L-glutamate is bound at residue Glu-608. Zn(2+) is bound by residues His-644, Cys-646, and Glu-668. The active-site Proton donor is His-697. Cys-729 serves as a coordination point for Zn(2+).

It belongs to the vitamin-B12 independent methionine synthase family. Zn(2+) serves as cofactor.

It catalyses the reaction 5-methyltetrahydropteroyltri-L-glutamate + L-homocysteine = tetrahydropteroyltri-L-glutamate + L-methionine. It participates in amino-acid biosynthesis; L-methionine biosynthesis via de novo pathway; L-methionine from L-homocysteine (MetE route): step 1/1. In terms of biological role, catalyzes the transfer of a methyl group from 5-methyltetrahydrofolate to homocysteine resulting in methionine formation. The polypeptide is 5-methyltetrahydropteroyltriglutamate--homocysteine methyltransferase (Yersinia enterocolitica serotype O:8 / biotype 1B (strain NCTC 13174 / 8081)).